The primary structure comprises 87 residues: Small ribosomal subunit protein uS17 (87 aa).

This sequence belongs to the universal ribosomal protein uS17 family. In terms of assembly, part of the 30S ribosomal subunit.

Its function is as follows. One of the primary rRNA binding proteins, it binds specifically to the 5'-end of 16S ribosomal RNA. The sequence is that of Small ribosomal subunit protein uS17 from Oceanobacillus iheyensis (strain DSM 14371 / CIP 107618 / JCM 11309 / KCTC 3954 / HTE831).